The primary structure comprises 1354 residues: Rho-associated protein kinase 1 (1354 aa).

Serine 2 bears the N-acetylserine mark. The Protein kinase domain maps to 76 to 338; sequence YEVVKVIGRG…VEEIKRHLFF (263 aa). ATP-binding positions include 82-90 and lysine 105; that span reads IGRGAFGEV. Aspartate 198 acts as the Proton acceptor in catalysis. Residues 341–409 enclose the AGC-kinase C-terminal domain; sequence DQWAWETLRD…YSNRRYLSSA (69 aa). Residues 368–727 form an interaction with FHOD1 region; sequence FDDLEEDKGE…KKLKEEREAR (360 aa). Residues 422-692 are a coiled coil; that stretch reads KSLQESLQKT…RLEQEVNEHK (271 aa). One can recognise an REM-1 domain in the interval 479–556; the sequence is STVSQIEKEK…LEEANDLLRT (78 aa). Lysine 647 bears the N6-acetyllysine mark. Positions 707–946 are SHROOM3 binding; the sequence is EAKSVAMCEM…TVSRLEEANS (240 aa). The 67-residue stretch at 949–1015 folds into the RhoBD domain; sequence TKDIEILRRE…LAEIMNRKDF (67 aa). The segment at 998–1010 is RHOA binding; the sequence is LKTQAVNKLAEIM. A coiled-coil region spans residues 1011-1102; that stretch reads NRKDFKIDRK…KLLDLSDSTS (92 aa). Residues serine 1105 and serine 1108 each carry the phosphoserine modification. Residues 1115 to 1354 are auto-inhibitory; that stretch reads NLPESRIEGW…VVKNTSGKTS (240 aa). Positions 1118-1317 constitute a PH domain; sequence ESRIEGWLSV…WVTHLVKKIP (200 aa). A Phorbol-ester/DAG-type zinc finger spans residues 1228-1281; the sequence is GHEFIPTLYHFPANCDACAKPLWHVFKPPPALECRRCHVKCHRDHLDKKEDLIC. The segment at 1320-1354 is disordered; the sequence is PPSGFVRASPRTLSTRSTANQSFRKVVKNTSGKTS. Residue serine 1328 is modified to Phosphoserine. Residues 1330–1354 are compositionally biased toward polar residues; sequence RTLSTRSTANQSFRKVVKNTSGKTS.

This sequence belongs to the protein kinase superfamily. AGC Ser/Thr protein kinase family. As to quaternary structure, homodimer. Interacts with RHOB, RHOC, MYLC2B and PTEN. Interacts with ITGB1BP1 (via N-terminus and PTB domain). Interacts with RHOA (activated by GTP), CHORDC1, DAPK3, GEM, JIP3, RHOE, PPP1R12A, PFN1, LIMK1, LIMK2 and TSG101. Interacts with FHOD1 in a Src-dependent manner. Interacts with SHROOM3. Mg(2+) serves as cofactor. In terms of processing, autophosphorylated on serine and threonine residues. Cleaved by caspase-3 during apoptosis. This leads to constitutive activation of the kinase and membrane blebbing. In terms of tissue distribution, detected in blood platelets.

The protein resides in the cytoplasm. The protein localises to the cytoskeleton. It localises to the microtubule organizing center. It is found in the centrosome. Its subcellular location is the centriole. The protein resides in the golgi apparatus membrane. The protein localises to the cell projection. It localises to the bleb. It is found in the cell membrane. Its subcellular location is the lamellipodium. The protein resides in the ruffle. The catalysed reaction is L-seryl-[protein] + ATP = O-phospho-L-seryl-[protein] + ADP + H(+). It carries out the reaction L-threonyl-[protein] + ATP = O-phospho-L-threonyl-[protein] + ADP + H(+). Its activity is regulated as follows. Activated by RHOA binding. Inhibited by Y-27632. Its function is as follows. Protein kinase which is a key regulator of the actin cytoskeleton and cell polarity. Involved in regulation of smooth muscle contraction, actin cytoskeleton organization, stress fiber and focal adhesion formation, neurite retraction, cell adhesion and motility via phosphorylation of DAPK3, GFAP, LIMK1, LIMK2, MYL9/MLC2, TPPP, PFN1 and PPP1R12A. Phosphorylates FHOD1 and acts synergistically with it to promote SRC-dependent non-apoptotic plasma membrane blebbing. Phosphorylates JIP3 and regulates the recruitment of JNK to JIP3 upon UVB-induced stress. Acts as a suppressor of inflammatory cell migration by regulating PTEN phosphorylation and stability. Acts as a negative regulator of VEGF-induced angiogenic endothelial cell activation. Required for centrosome positioning and centrosome-dependent exit from mitosis. Plays a role in terminal erythroid differentiation. Inhibits podocyte motility via regulation of actin cytoskeletal dynamics and phosphorylation of CFL1. Promotes keratinocyte terminal differentiation. Involved in osteoblast compaction through the fibronectin fibrillogenesis cell-mediated matrix assembly process, essential for osteoblast mineralization. May regulate closure of the eyelids and ventral body wall by inducing the assembly of actomyosin bundles. The sequence is that of Rho-associated protein kinase 1 (ROCK1) from Homo sapiens (Human).